The chain runs to 333 residues: Heat shock transcription factor, X-linked member 4 (333 aa).

The tract at residues 1–66 is disordered; it reads MASQNTEQEY…QDNSPPEDRN (66 aa). A compositionally biased stretch (low complexity) spans 29-39; the sequence is GSSPDPNPDSS. The segment covering 49–60 has biased composition (polar residues); that stretch reads AMSQDPGSQDNS. Residues 79–182 mediate DNA binding; sequence FRLSFPRKLW…PRLLENIQRK (104 aa). The tract at residues 227–275 is disordered; sequence QGAPSVQGPSGTQSFRRSGMWSKKSATRHPLGNGPPQEPNGPSWEGTSG. The segment covering 228-242 has biased composition (polar residues); sequence GAPSVQGPSGTQSFR.

It belongs to the HSF family.

Its subcellular location is the nucleus. The chain is Heat shock transcription factor, X-linked member 4 from Homo sapiens (Human).